Reading from the N-terminus, the 278-residue chain is Odontogenic ameloblast-associated protein (278 aa).

Residues 1–15 (MKIIILLGLIGATSS) form the signal peptide. Residues 103 to 124 (GGQAGQPDFSQQQTPSQTQQAS) are disordered. Positions 107-124 (GQPDFSQQQTPSQTQQAS) are enriched in low complexity. Residues Thr116 and Thr120 are each glycosylated (O-linked (GalNAc...) threonine). Positions 126–128 (MSY) are interaction with ARHGEF5. The interval 230-278 (GFKQDNVGVSTPSTSPKPDTGNFFTSEINPTIAPLLPEQKVNADSLREP) is disordered. Over residues 236–258 (VGVSTPSTSPKPDTGNFFTSEIN) the composition is skewed to polar residues. O-linked (GalNAc...) threonine glycosylation is found at Thr240, Thr243, Thr249, and Thr254.

It belongs to the ODAM family. Interacts (via C-terminus) with ARHGEF5. Post-translationally, O-glycosylated. Highly expressed in tooth-associated epithelia. In tooth, it is only detected in the ameloblast layer of the enamel organ, starting at post-secretory transition and extending throughout the maturation stage. Also detected in epithelial cells of the gingiva which bind it to the tooth surface (junctional epithelium) (at protein level). Predominantly expressed in mandible, but also expressed at weak level in nasal and salivary glands, and at much lower level in epididymis.

Its subcellular location is the secreted. The protein resides in the cytoplasm. It is found in the nucleus. In terms of biological role, tooth-associated epithelia protein that probably plays a role in odontogenesis, the complex process that results in the initiation and generation of the tooth. May be incorporated in the enamel matrix at the end of mineralization process. Involved in the induction of RHOA activity via interaction with ARHGEF and expression of downstream factors such as ROCK. Plays a role in attachment of the junctional epithelium to the tooth surface. This chain is Odontogenic ameloblast-associated protein (Odam), found in Rattus norvegicus (Rat).